The chain runs to 341 residues: MESSWPAQSSFSYYNQGSMQTSSRHASSPTNEYSDRTPRRSAAQPQMPAFLPPPPPHGHQLTESGGDSLPSFSHSLYSPYHGPGGNLPSSNPHGMAHSMPSYSHISALSGTGSGFQYTNHSPMGLNEPLTSHSRSQITHSYHDPPRLPGYSSSPNLHQLSPVSPTAHLLPSMQPPSASPSSSSFPSSIPRTPATLPKGVKRHSLGSEQSFDSWDDEQEMSSGKVTGDRKHEKDSQPWGMPQEEYKKLNPKDKKQVRNRIGARRFRAKRKDYVNQLEAGIRLRDDEITNLQSQLESQRNEINELRLQLKLPLLPRGELSGLGLTMETQGQMERWENNDSMSR.

Composition is skewed to polar residues over residues 1–32, 61–76, 128–139, and 150–163; these read MESS…PTNE, LTES…SHSL, PLTSHSRSQITH, and YSSS…SPVS. 2 disordered regions span residues 1–95 and 118–254; these read MESS…PHGM and TNHS…DKKQ. The segment covering 178-192 has biased composition (low complexity); the sequence is SPSSSSFPSSIPRTP. Basic and acidic residues-rich tracts occupy residues 225-234 and 242-254; these read TGDRKHEKDS and EEYK…DKKQ. A basic motif region spans residues 250-269; it reads KDKKQVRNRIGARRFRAKRK. Residues 250–308 enclose the bZIP domain; that stretch reads KDKKQVRNRIGARRFRAKRKDYVNQLEAGIRLRDDEITNLQSQLESQRNEINELRLQLK. The interval 279-307 is leucine-zipper; that stretch reads IRLRDDEITNLQSQLESQRNEINELRLQL.

Belongs to the bZIP family.

It is found in the nucleus. The protein resides in the cytoplasm. In terms of biological role, transcription factor that promotes the production of melanin, a pigment that serves as antioxidant, reactive oxygen species (ROS) scavenger and that protect fungal pathogens from radiation and host immune responses. The polypeptide is BZIP domain-containing transcription factor BZP4 (Cryptococcus neoformans var. grubii serotype A (strain H99 / ATCC 208821 / CBS 10515 / FGSC 9487) (Filobasidiella neoformans var. grubii)).